The following is a 210-amino-acid chain: UPF0301 protein Mnod_6933 (210 aa).

It belongs to the UPF0301 (AlgH) family.

In Methylobacterium nodulans (strain LMG 21967 / CNCM I-2342 / ORS 2060), this protein is UPF0301 protein Mnod_6933.